Reading from the N-terminus, the 505-residue chain is Maturase K (505 aa).

Belongs to the intron maturase 2 family. MatK subfamily.

The protein resides in the plastid. It is found in the chloroplast. Functionally, usually encoded in the trnK tRNA gene intron. Probably assists in splicing its own and other chloroplast group II introns. In Nuphar variegata (Yellow pond lily), this protein is Maturase K.